The primary structure comprises 276 residues: Small ribosomal subunit protein uS2 (276 aa).

Residues 254–276 form a disordered region; the sequence is LAGATAAAPAEGAVATETTPTEG. A compositionally biased stretch (low complexity) spans 255 to 276; sequence AGATAAAPAEGAVATETTPTEG.

The protein belongs to the universal ribosomal protein uS2 family.

This is Small ribosomal subunit protein uS2 from Mycobacterium ulcerans (strain Agy99).